We begin with the raw amino-acid sequence, 568 residues long: Phenylalanine--tRNA ligase beta subunit (568 aa).

Residues 278-353 enclose the B5 domain; the sequence is LTPKSFEVEL…IAYGYNEIEP (76 aa). D331, D337, E340, and D341 together coordinate Mg(2+).

The protein belongs to the phenylalanyl-tRNA synthetase beta subunit family. Type 2 subfamily. In terms of assembly, tetramer of two alpha and two beta subunits. Mg(2+) is required as a cofactor.

The protein localises to the cytoplasm. It catalyses the reaction tRNA(Phe) + L-phenylalanine + ATP = L-phenylalanyl-tRNA(Phe) + AMP + diphosphate + H(+). In Thermococcus gammatolerans (strain DSM 15229 / JCM 11827 / EJ3), this protein is Phenylalanine--tRNA ligase beta subunit.